The sequence spans 43 residues: Thymosin beta-12 (43 aa).

Basic and acidic residues-rich tracts occupy residues Met1–Glu25 and Glu33–Ala43. The interval Met1–Ala43 is disordered. Residue Ser2 is modified to N-acetylserine.

The protein belongs to the thymosin beta family.

It is found in the cytoplasm. The protein resides in the cytoskeleton. Its function is as follows. Plays an important role in the organization of the cytoskeleton. Binds to and sequesters actin monomers (G actin) and therefore inhibits actin polymerization. This is Thymosin beta-12 from Oncorhynchus mykiss (Rainbow trout).